The primary structure comprises 186 residues: uncharacterized protein (186 aa).

This is an uncharacterized protein from Methanocaldococcus jannaschii (strain ATCC 43067 / DSM 2661 / JAL-1 / JCM 10045 / NBRC 100440) (Methanococcus jannaschii).